The primary structure comprises 88 residues: Small ribosomal subunit protein bS16 (88 aa).

This sequence belongs to the bacterial ribosomal protein bS16 family.

The chain is Small ribosomal subunit protein bS16 from Anaeromyxobacter sp. (strain K).